The following is a 79-amino-acid chain: Large ribosomal subunit protein uL29 (79 aa).

This sequence belongs to the universal ribosomal protein uL29 family.

In Gluconacetobacter diazotrophicus (strain ATCC 49037 / DSM 5601 / CCUG 37298 / CIP 103539 / LMG 7603 / PAl5), this protein is Large ribosomal subunit protein uL29.